The sequence spans 398 residues: Enolase (398 aa).

A (2R)-2-phosphoglycerate-binding site is contributed by glutamine 154. Glutamate 196 (proton donor) is an active-site residue. Residues aspartate 232, glutamate 273, and aspartate 300 each coordinate Mg(2+). 4 residues coordinate (2R)-2-phosphoglycerate: lysine 325, arginine 354, serine 355, and lysine 376. Residue lysine 325 is the Proton acceptor of the active site.

The protein belongs to the enolase family. Mg(2+) serves as cofactor.

Its subcellular location is the cytoplasm. The protein resides in the secreted. It localises to the cell surface. The catalysed reaction is (2R)-2-phosphoglycerate = phosphoenolpyruvate + H2O. The protein operates within carbohydrate degradation; glycolysis; pyruvate from D-glyceraldehyde 3-phosphate: step 4/5. Catalyzes the reversible conversion of 2-phosphoglycerate (2-PG) into phosphoenolpyruvate (PEP). It is essential for the degradation of carbohydrates via glycolysis. The sequence is that of Enolase from Natronomonas pharaonis (strain ATCC 35678 / DSM 2160 / CIP 103997 / JCM 8858 / NBRC 14720 / NCIMB 2260 / Gabara) (Halobacterium pharaonis).